Reading from the N-terminus, the 297-residue chain is Phosphatidylinositol N-acetylglucosaminyltransferase subunit C (297 aa).

Transmembrane regions (helical) follow at residues 67–87 (VFVV…WLFG), 88–108 (TGLA…GGEG), 153–173 (AVFM…AAIV), and 239–259 (ALGG…LLLI).

Belongs to the PIGC family. Component of the glycosylphosphatidylinositol-N-acetylglucosaminyltransferase (GPI-GnT) complex composed at least by PIGA, PIGC, PIGH, PIGP, PIGQ, PIGY and DPM2. Interacts with PIGQ. Interacts with the heterodimer PIGA:PIGH.

The protein resides in the endoplasmic reticulum membrane. It functions in the pathway glycolipid biosynthesis; glycosylphosphatidylinositol-anchor biosynthesis. Functionally, part of the glycosylphosphatidylinositol-N-acetylglucosaminyltransferase (GPI-GnT) complex that catalyzes the transfer of N-acetylglucosamine from UDP-N-acetylglucosamine to phosphatidylinositol and participates in the first step of GPI biosynthesis. The sequence is that of Phosphatidylinositol N-acetylglucosaminyltransferase subunit C from Bos taurus (Bovine).